Here is a 444-residue protein sequence, read N- to C-terminus: uncharacterized protein (444 aa).

Transmembrane regions (helical) follow at residues 9–29 (LIVS…MIAV), 42–62 (IASI…TQPI), 82–102 (LFLI…LIVF), 104–126 (ALQA…HVVS), 136–156 (FFGL…SILI), 164–184 (IFWV…TMFP), 193–213 (APLD…IILL), 217–237 (EAPW…PLFF), 263–283 (LSVL…PLFM), 295–315 (GMAL…GAQL), 324–344 (IIFL…LLSS), 347–367 (SVLF…VGLT), 387–407 (GIFS…IGLI), and 411–431 (HTLF…SLGI).

It belongs to the major facilitator superfamily. TCR/Tet family.

The protein localises to the cell membrane. This is an uncharacterized protein from Bacillus subtilis (strain 168).